The following is a 335-amino-acid chain: Beta-ketoacyl-[acyl-carrier-protein] synthase III 3 (335 aa).

Active-site residues include C114 and H256. The interval 257–261 (QANHR) is ACP-binding. The active site involves N286.

Belongs to the thiolase-like superfamily. FabH family. Homodimer.

It localises to the cytoplasm. The enzyme catalyses malonyl-[ACP] + acetyl-CoA + H(+) = 3-oxobutanoyl-[ACP] + CO2 + CoA. The protein operates within lipid metabolism; fatty acid biosynthesis. Its function is as follows. Catalyzes the condensation reaction of fatty acid synthesis by the addition to an acyl acceptor of two carbons from malonyl-ACP. Catalyzes the first condensation reaction which initiates fatty acid synthesis and may therefore play a role in governing the total rate of fatty acid production. Possesses both acetoacetyl-ACP synthase and acetyl transacylase activities. Its substrate specificity determines the biosynthesis of branched-chain and/or straight-chain of fatty acids. The sequence is that of Beta-ketoacyl-[acyl-carrier-protein] synthase III 3 from Streptomyces coelicolor (strain ATCC BAA-471 / A3(2) / M145).